The sequence spans 188 residues: dCTP deaminase (188 aa).

Residues 111–116, 135–137, Gln-156, Tyr-170, Lys-179, and Gln-180 contribute to the dCTP site; these read KSTYAR and TLE. Residue Glu-137 is the Proton donor/acceptor of the active site.

Belongs to the dCTP deaminase family. In terms of assembly, homotrimer.

It catalyses the reaction dCTP + H2O + H(+) = dUTP + NH4(+). Its pathway is pyrimidine metabolism; dUMP biosynthesis; dUMP from dCTP (dUTP route): step 1/2. In terms of biological role, catalyzes the deamination of dCTP to dUTP. This is dCTP deaminase from Rickettsia africae (strain ESF-5).